The primary structure comprises 370 residues: Peptide chain release factor 1 (370 aa).

Q239 bears the N5-methylglutamine mark.

It belongs to the prokaryotic/mitochondrial release factor family. Post-translationally, methylated by PrmC. Methylation increases the termination efficiency of RF1.

Its subcellular location is the cytoplasm. Its function is as follows. Peptide chain release factor 1 directs the termination of translation in response to the peptide chain termination codons UAG and UAA. The sequence is that of Peptide chain release factor 1 from Bacteroides fragilis (strain ATCC 25285 / DSM 2151 / CCUG 4856 / JCM 11019 / LMG 10263 / NCTC 9343 / Onslow / VPI 2553 / EN-2).